The sequence spans 409 residues: AT-rich interactive domain-containing protein 3C (409 aa).

A compositionally biased stretch (low complexity) spans Met-1–Gln-14. The disordered stretch occupies residues Met-1–Gln-91. The segment covering Leu-19–Pro-30 has biased composition (pro residues). Residues Ala-49 to Ala-70 show a composition bias toward acidic residues. Positions Asp-110 to Arg-202 constitute an ARID domain. Disordered regions lie at residues Asn-233–Ala-274, Thr-306–Ala-333, and Pro-385–Pro-409. Positions Ala-235–Pro-257 are enriched in low complexity. In terms of domain architecture, REKLES spans Leu-301–Val-386. Over residues Thr-306 to Ala-320 the composition is skewed to basic and acidic residues. The segment covering Thr-393–Gly-402 has biased composition (pro residues).

Interacts (via REKLES DOMAIN) with NPM1; the interaction mediates ARID3C nuclear shuttling.

The protein localises to the nucleus. Its function is as follows. Transcription factor involved in monocyte-to-macrophage differentiation. Forms a complex with NPM1 to translocate to the nucleus, acting as a transcription factor that promotes the expression of the genes involved in macrophage differentiation, such as STAT3, STAT1 and JUNB. The protein is AT-rich interactive domain-containing protein 3C (Arid3c) of Mus musculus (Mouse).